The following is a 514-amino-acid chain: Cilia- and flagella-associated protein 53 (514 aa).

Coiled coils occupy residues 91 to 176 (VINT…EKKV) and 205 to 478 (WEED…AGLA). Disordered regions lie at residues 261–296 (QNKAQIKREDEQEKLQKQKRRQETRSSLKKAVQDKI) and 495–514 (QALSQNVHPMRRGYPDKPPL).

This sequence belongs to the CFAP53 family. In terms of assembly, microtubule inner protein component of sperm flagellar doublet microtubules. Interacts with PIERCE1 and PIERCE2; the interactions link outer dynein arms docking complex (ODA-DC) to the internal microtubule inner proteins (MIP) in cilium axoneme. Interacts with CCDC38. Interacts with CCDC42 and IFT88. Interacts with centriolar satellite proteins PIBF1/CEP90 and PCM1. Interacts with dyneins DNAIC1, DNAIC2 AND DNAH11 and with ODA-DC component ODAD4/TTC25. In terms of tissue distribution, expressed predominantly in testis (at protein level). In embryos at 8 dpc, specifically expressed in the node, in particular within the pit cells that are located at the center of the node and have rotating monocilia on their apical surface. In the adult, expressed in epithelial cells of the trachea, brain ventricles, oviduct and testis.

The protein localises to the cytoplasm. It localises to the cytoskeleton. Its subcellular location is the cilium axoneme. The protein resides in the flagellum axoneme. It is found in the microtubule organizing center. The protein localises to the centrosome. It localises to the centriolar satellite. Its subcellular location is the spindle pole. Its function is as follows. Microtubule inner protein (MIP) part of the dynein-decorated doublet microtubules (DMTs) in cilia axoneme, which is required for motile cilia beating. Regulates motility patterns of both 9+0 and 9+2 motile cilia through differential localization and recruitment of axonemal dynein components. Required for centriolar satellite integrity and non-motile cilium assembly. Required for motile cilium formation. Through its role in the beating of primary cilia, involved in the establishment of organ laterality during embryogenesis. Required for sperm flagellum biogenesis and is essential for male fertility. This chain is Cilia- and flagella-associated protein 53, found in Mus musculus (Mouse).